Here is a 295-residue protein sequence, read N- to C-terminus: Protoheme IX farnesyltransferase (295 aa).

A run of 9 helical transmembrane segments spans residues Leu30 to Ile50, Ala51 to Trp71, Ile93 to Ile115, Tyr119 to Tyr136, Ile148 to Gly168, Leu175 to Leu195, Ile219 to Leu239, Leu244 to Phe264, and Met275 to Phe295.

Belongs to the UbiA prenyltransferase family. Protoheme IX farnesyltransferase subfamily.

The protein localises to the cell inner membrane. It catalyses the reaction heme b + (2E,6E)-farnesyl diphosphate + H2O = Fe(II)-heme o + diphosphate. Its pathway is porphyrin-containing compound metabolism; heme O biosynthesis; heme O from protoheme: step 1/1. Functionally, converts heme B (protoheme IX) to heme O by substitution of the vinyl group on carbon 2 of heme B porphyrin ring with a hydroxyethyl farnesyl side group. This Ehrlichia ruminantium (strain Gardel) protein is Protoheme IX farnesyltransferase.